Here is a 752-residue protein sequence, read N- to C-terminus: ATP-dependent RNA helicase DRS1 (752 aa).

Disordered regions lie at residues 1-61 (MVVG…NLDE) and 119-223 (GLVK…TEGD). A compositionally biased stretch (acidic residues) spans 19 to 34 (DSEDDVPILDSSDDEK). Basic residues predominate over residues 40 to 51 (TTKKRKGKNNKK). Residues 124–142 (AHIDSKQEEETEKEKVEKE) show a composition bias toward basic and acidic residues. 2 stretches are compositionally biased toward acidic residues: residues 167–191 (NQSE…QEEM) and 200–209 (DEIDEEDDSE). Ser208 is modified (phosphoserine). Positions 231-259 (ENFNSLSLSRPVLKGLASLGYVKPSPIQS) match the Q motif motif. One can recognise a Helicase ATP-binding domain in the interval 262 to 437 (IPIALLGKDI…SLSLKKPVRI (176 aa)). Position 275–282 (275–282 (AVTGSGKT)) interacts with ATP. Positions 385 to 388 (DEAD) match the DEAD box motif. Positions 448 to 639 (KLTQEFVRIR…SMNDTIEDIL (192 aa)) constitute a Helicase C-terminal domain. The stretch at 621–667 (IEETNKLVESMNDTIEDILVEEKEEKEILRAEMQLRKGENMLKHKKE) forms a coiled coil. The segment at 673–752 (RRTWFQSESD…NKKKGFKSRR (80 aa)) is disordered. A compositionally biased stretch (basic residues) spans 694 to 705 (RNKKVTNSKKRK). The segment covering 722–734 (TKTDRIADQERTF) has biased composition (basic and acidic residues). Basic residues predominate over residues 735-752 (KKQKSTNSNKKKGFKSRR).

This sequence belongs to the DEAD box helicase family. DDX27/DRS1 subfamily. Interacts with RRP1 and associates with pre-ribosomal particles.

The protein localises to the nucleus. It localises to the nucleolus. It catalyses the reaction ATP + H2O = ADP + phosphate + H(+). Functionally, ATP-binding RNA helicase involved in ribosome assembly. In Saccharomyces cerevisiae (strain ATCC 204508 / S288c) (Baker's yeast), this protein is ATP-dependent RNA helicase DRS1 (DRS1).